The chain runs to 271 residues: Secretagogin (271 aa).

6 EF-hand domains span residues 8–43 (LDAA…LLKK), 53–88 (KVQG…EDEN), 100–135 (DNSV…LFLQ), 144–179 (KLDE…QENF), 192–227 (ERKS…MMEL), and 235–271 (VDLD…KANP). Asp21, Asp23, Asn25, Tyr27, and Glu32 together coordinate Ca(2+). Residues Asp113, Asp115, Ser117, Glu124, Asn159, Asp161, Arg163, Asp168, Asp205, Ser207, Thr209, Glu216, Asp249, Asn251, Asp253, Lys255, and Glu260 each coordinate Ca(2+).

It localises to the cytoplasm. This is Secretagogin (scgn) from Xenopus laevis (African clawed frog).